Consider the following 413-residue polypeptide: DNA polymerase IV 1 (413 aa).

The region spanning 7–188 (IFHVDMNSFY…LPIEEMYGIG (182 aa)) is the UmuC domain. Mg(2+)-binding residues include Asp11 and Asp107. Glu108 is an active-site residue.

This sequence belongs to the DNA polymerase type-Y family. As to quaternary structure, monomer. Requires Mg(2+) as cofactor.

The protein localises to the cytoplasm. The catalysed reaction is DNA(n) + a 2'-deoxyribonucleoside 5'-triphosphate = DNA(n+1) + diphosphate. Functionally, poorly processive, error-prone DNA polymerase involved in untargeted mutagenesis. Copies undamaged DNA at stalled replication forks, which arise in vivo from mismatched or misaligned primer ends. These misaligned primers can be extended by PolIV. Exhibits no 3'-5' exonuclease (proofreading) activity. May be involved in translesional synthesis, in conjunction with the beta clamp from PolIII. This is DNA polymerase IV 1 (dinB1) from Halalkalibacterium halodurans (strain ATCC BAA-125 / DSM 18197 / FERM 7344 / JCM 9153 / C-125) (Bacillus halodurans).